A 333-amino-acid chain; its full sequence is Cathepsin M (333 aa).

A signal peptide spans 1–15 (MTSAIFLAMLCLGMA). A propeptide spans 16–113 (LPSPAPDPIL…KSVQKRLSVN (98 aa)) (activation peptide). 2 cysteine pairs are disulfide-bonded: Cys-135–Cys-178 and Cys-169–Cys-211. The active site involves Cys-138. Asn-217, Asn-221, and Asn-268 each carry an N-linked (GlcNAc...) asparagine glycan. A disulfide bridge links Cys-269 with Cys-322. Active-site residues include His-276 and Asn-300.

The protein belongs to the peptidase C1 family. As to expression, placenta.

Its subcellular location is the lysosome. The polypeptide is Cathepsin M (Ctsm) (Mus musculus (Mouse)).